Reading from the N-terminus, the 142-residue chain is Extracellular globin-1 (142 aa).

The region spanning 1 to 142 is the Globin domain; it reads ECLVTEGLKV…DQIIDGIKDI (142 aa). Cys2 and Cys131 form a disulfide bridge. Heme b is bound at residue His94.

This sequence belongs to the globin family. As to quaternary structure, the extracellular hemoglobin of the earthworm consists of 12 subunits that have a hexagonal bilayer structure with a molecular weight near 3.8 million. Each one-twelfth subunit is composed primarily of disulfide linked trimers (chains A, B, and C) and monomers (chain D).

The protein is Extracellular globin-1 of Lumbricus terrestris (Common earthworm).